Consider the following 295-residue polypeptide: Small ribosomal subunit biogenesis GTPase RsgA (295 aa).

The 161-residue stretch at 68-228 (KNLLTKPHVA…VVDTPGFANL (161 aa)) folds into the CP-type G domain. Residues 117 to 120 (NKMD) and 170 to 178 (GLSGVGKSS) each bind GTP. Cys-250, Cys-255, His-257, and Cys-263 together coordinate Zn(2+).

It belongs to the TRAFAC class YlqF/YawG GTPase family. RsgA subfamily. Monomer. Associates with 30S ribosomal subunit, binds 16S rRNA. Requires Zn(2+) as cofactor.

Its subcellular location is the cytoplasm. One of several proteins that assist in the late maturation steps of the functional core of the 30S ribosomal subunit. Helps release RbfA from mature subunits. May play a role in the assembly of ribosomal proteins into the subunit. Circularly permuted GTPase that catalyzes slow GTP hydrolysis, GTPase activity is stimulated by the 30S ribosomal subunit. The polypeptide is Small ribosomal subunit biogenesis GTPase RsgA (Thermotoga maritima (strain ATCC 43589 / DSM 3109 / JCM 10099 / NBRC 100826 / MSB8)).